We begin with the raw amino-acid sequence, 365 residues long: S-type anion channel SLAH4 (365 aa).

At 1 to 25 (MEIPSQEIHIMIDNTISRRKERKTN) the chain is on the cytoplasmic side. Residues 26–46 (LADAEPIVLMSVLSSLHAGYF) traverse the membrane as a helical segment. Topologically, residues 47 to 73 (RISLSLCSQALLWKIMVHLHSELPSMA) are extracellular. Residues 74–94 (YYLLWYLALATQVSLCFLYAF) traverse the membrane as a helical segment. Residues 95–106 (KCIFLFDMVKEE) lie on the Cytoplasmic side of the membrane. The chain crosses the membrane as a helical span at residues 107–127 (FSHYIGVNYLYAPSISCLLLL). At 128 to 131 (QSAP) the chain is on the extracellular side. Residues 132–152 (MIEPHSVLYQTLFWIFAVPVL) traverse the membrane as a helical segment. Over 153–168 (TLDTKLYGQWFTTEKR) the chain is Cytoplasmic. The chain crosses the membrane as a helical span at residues 169 to 189 (FLSIMANPASQVSVIANLVAA). The Extracellular segment spans residues 190–199 (RGAAEMGWKE). A helical transmembrane segment spans residues 200–220 (CALCLFSLGMVHYLVIFVTLY). At 221–235 (QRLPGGNNFPTTLRP) the chain is on the cytoplasmic side. Residues 236 to 256 (VFFLFFAAPATASLAWNSICG) traverse the membrane as a helical segment. Asn257 is a topological domain (extracellular). A helical membrane pass occupies residues 258 to 278 (FDTIAKMLFFLSLFIFISLVC). Topologically, residues 279-291 (RPNLLKKSIKRFN) are cytoplasmic. The chain crosses the membrane as a helical span at residues 292–312 (VAWWAYSFPITFLALNSVQYA). The Extracellular portion of the chain corresponds to 313–321 (QEVKDHVAS). The chain crosses the membrane as a helical span at residues 322 to 342 (VLMFIFSSMSVLIFISVMLLT). At 343-365 (AANSKRLLRRDHVLWSSTGPKDK) the chain is on the cytoplasmic side.

It belongs to the SLAC1 S-type anion channel family. In terms of assembly, homotrimer.

It localises to the cell membrane. Its function is as follows. Slow, weak voltage-dependent S-type anion efflux channel involved in maintenance of anion homeostasis. The protein is S-type anion channel SLAH4 (SLAH4) of Arabidopsis thaliana (Mouse-ear cress).